We begin with the raw amino-acid sequence, 29 residues long: Dermaseptin-J9 (29 aa).

Expressed by the skin glands.

It localises to the secreted. Functionally, has antimicrobial activity. The sequence is that of Dermaseptin-J9 from Phasmahyla jandaia (Jandaia leaf frog).